The sequence spans 831 residues: Prickle-like protein 1 (831 aa).

A PET domain is found at 14-122; it reads FGCQRSSTSD…TIKLLSRAMM (109 aa). LIM zinc-binding domains are found at residues 124–189, 189–249, and 249–313; these read AVCE…LLKP, PRCS…LYAE, and EYCE…EDIH. Residues 314–346 are disordered; the sequence is ASDSSDSAFQSARSRDSRRSVRMGRSSRSADQC. Phosphoserine occurs at positions 315, 591, and 594. Disordered regions lie at residues 664–688 and 763–831; these read EERG…NALN and CSSS…CIIS. Basic residues predominate over residues 669-680; it reads RPHHHRHRRSRK. Position 683 is a phosphoserine (serine 683). Residues 797–812 show a composition bias toward polar residues; the sequence is DLSSPASALPTPQFNQ. Residues 815-831 show a composition bias toward basic residues; sequence TKSKKKKGHRGKNCIIS. The residue at position 828 (cysteine 828) is a Cysteine methyl ester. Cysteine 828 is lipidated: S-farnesyl cysteine. Positions 829–831 are cleaved as a propeptide — removed in mature form; it reads IIS.

The protein belongs to the prickle / espinas / testin family. In terms of assembly, interacts with REST.

It localises to the nucleus membrane. Its subcellular location is the cytoplasm. The protein resides in the cytosol. In terms of biological role, involved in the planar cell polarity pathway that controls convergent extension during gastrulation and neural tube closure. Convergent extension is a complex morphogenetic process during which cells elongate, move mediolaterally, and intercalate between neighboring cells, leading to convergence toward the mediolateral axis and extension along the anteroposterior axis. Necessary for nuclear localization of REST. May serve as nuclear receptor. This chain is Prickle-like protein 1 (Prickle1), found in Rattus norvegicus (Rat).